A 334-amino-acid chain; its full sequence is MSNNATTYVVSPAPLKTTSTSSKTTFHFVAGLCSGLTSSILLQPADLLKTRVQQSHKSASLLPTLKTILSSPHPIRSLWRGTLPSALRTGFGSALYFTSLNALRQGIAQTRTPLAIASASSDGKARTSSSALPKLSNWANLATGAIARVAAGFVMMPVTVLKVRYESDYYAYRSLVGAGRDIVRTEGVRGLFSGFGATAARDAPYAGLYVLFYEQLKRRLASVASSEYSEQPLKTSSSSSINFVSGGLAAGLATAITNPFDAVKTRLQLMPGKYGNMMRAVRLMIHEDGVRSLFGGLGLRITRKALSSALAWTVYEELILRAEGHWAEQGKINL.

3 Solcar repeats span residues 22–106 (SKTT…LRQG), 135–219 (LSNW…LKRR), and 237–321 (SSSS…LILR). Transmembrane regions (helical) follow at residues 28–53 (FVAGLCSGLTSSILLQPADLLKTRVQ), 81–107 (GTLPSALRTGFGSALYFTSLNALRQGI), 141–166 (LATGAIARVAAGFVMMPVTVLKVRYE), 194–217 (GFGATAARDAPYAGLYVLFYEQLK), 241–267 (INFVSGGLAAGLATAITNPFDAVKTRL), and 296–314 (GLGLRITRKALSSALAWTV).

Belongs to the mitochondrial carrier (TC 2.A.29) family. SLC25A38 subfamily.

Its subcellular location is the mitochondrion inner membrane. The enzyme catalyses glycine(in) = glycine(out). Functionally, mitochondrial glycine transporter that imports glycine into the mitochondrial matrix. Plays an important role in providing glycine for the first enzymatic step in heme biosynthesis, the condensation of glycine with succinyl-CoA to produce 5-aminolevulinate (ALA) in the mitochondrial matrix. This Aspergillus clavatus (strain ATCC 1007 / CBS 513.65 / DSM 816 / NCTC 3887 / NRRL 1 / QM 1276 / 107) protein is Mitochondrial glycine transporter.